The primary structure comprises 363 residues: Cyclin-D1-1 (363 aa).

The interval 39-77 is disordered; it reads ELEREGEPAQGSSPSSSLSCAAAAAAAADDDDEDEDEHG. Low complexity predominate over residues 50 to 65; sequence SSPSSSLSCAAAAAAA. Positions 66 to 75 are enriched in acidic residues; the sequence is ADDDDEDEDE.

It belongs to the cyclin family. Cyclin D subfamily.

This chain is Cyclin-D1-1 (CYCD1-1), found in Oryza sativa subsp. japonica (Rice).